An 87-amino-acid polypeptide reads, in one-letter code: Small ribosomal subunit protein bS20 (87 aa).

Belongs to the bacterial ribosomal protein bS20 family.

Its function is as follows. Binds directly to 16S ribosomal RNA. The sequence is that of Small ribosomal subunit protein bS20 from Rickettsia bellii (strain OSU 85-389).